The following is a 127-amino-acid chain: Large ribosomal subunit protein bL17 (127 aa).

Belongs to the bacterial ribosomal protein bL17 family. Part of the 50S ribosomal subunit. Contacts protein L32.

The protein is Large ribosomal subunit protein bL17 of Xanthomonas axonopodis pv. citri (strain 306).